A 394-amino-acid chain; its full sequence is Suppressor APC domain-containing protein 2 (394 aa).

3 disordered regions span residues 1–23 (MAGA…STEG), 95–125 (LLSA…RLVF), and 150–188 (GPSA…SSSA). The segment covering 177 to 188 (SQSAALEPSSSA) has biased composition (polar residues). Position 219 is a phosphothreonine (threonine 219). Positions 227 to 277 (GLLKQMKELEQEKEVLLQGLEMMARGRDWYQQQLQRVQERQRRLGQSRASA) form a coiled coil. Position 284 is a phosphoserine (serine 284). Residues 336–384 (QQQTILMLKEQNRLLTQEVTEKSERITQLEQEKSALIKQLFEARALSQQ) are a coiled coil.

As to quaternary structure, interacts with a spindle orientation complex at least composed of GNAI1, GPSM2 and NUMA1. Interacts with GPSM2 (via TPR motifs); this interaction is required to prevent GPSM2 anchoring at the mitotic apical cortex and is inhibited in presence of NUMA1 in a dose dependent manner. Interacts with PARD3. As to expression, expressed in 5-month-old fetal tissues, including stomach, intestine, colon, liver, brain, lung, heart, spleen and kidney. Undetectable in non-cancerous adult tissues. Expressed in many primary gastric carcinoma, but almost not in adjacent normal mucosa. Expressed preferentially in M and G1 phases, compared to S and G2 phases. Expression is up-regulated in hepatocellular carcinoma (HCC) and colorectal cancer (CRC) tissues (at protein level).

Its subcellular location is the cytoplasm. The protein resides in the nucleus. The protein localises to the cell cortex. It localises to the apical cell membrane. It is found in the cell junction. Its subcellular location is the tight junction. In terms of biological role, plays a role in planar mitotic spindle orientation in retinal progenitor cells (RPCs) and promotes the production of symmetric terminal divisions. Negatively regulates the mitotic apical cortex localization of GPSM2. Involved also in positive regulation of cell proliferation and tumor cell growth. The sequence is that of Suppressor APC domain-containing protein 2 from Homo sapiens (Human).